A 51-amino-acid chain; its full sequence is Large ribosomal subunit protein eL39 (51 aa).

Residues 32 to 51 (KGSVKQHPKMRHWRRKNLKK) are disordered. The span at 33–51 (GSVKQHPKMRHWRRKNLKK) shows a compositional bias: basic residues.

The protein belongs to the eukaryotic ribosomal protein eL39 family.

In Methanococcus maripaludis (strain C5 / ATCC BAA-1333), this protein is Large ribosomal subunit protein eL39.